We begin with the raw amino-acid sequence, 633 residues long: DNA mismatch repair protein MutL (633 aa).

Disordered stretches follow at residues 337–364 (RPDD…GEFG) and 383–405 (VGWS…TRPE). The span at 385 to 396 (WSGGSSASGGSS) shows a compositional bias: gly residues.

This sequence belongs to the DNA mismatch repair MutL/HexB family.

Functionally, this protein is involved in the repair of mismatches in DNA. It is required for dam-dependent methyl-directed DNA mismatch repair. May act as a 'molecular matchmaker', a protein that promotes the formation of a stable complex between two or more DNA-binding proteins in an ATP-dependent manner without itself being part of a final effector complex. The protein is DNA mismatch repair protein MutL of Pseudomonas aeruginosa (strain LESB58).